The chain runs to 227 residues: Protein rapunzel (227 aa).

A helical membrane pass occupies residues 179–196 (LAYLFCIGFIALMGYYGI).

The protein localises to the membrane. This is Protein rapunzel from Danio rerio (Zebrafish).